A 305-amino-acid polypeptide reads, in one-letter code: MSKKLTFQEIILTLQRFWNDQGCMLMQAYDNEKGAGTMSPYTFLRAIGPEPWNAAYVEPSRRPADGRYGENPNRLYQHHQFQVVMKPSPSNIQELYLESLEKLGINPLEHDIRFVEDNWENPSTGSAGLGWEVWLDGMEITQFTYFQQVGGLATSPVTAEVTYGLERLASYIQEVDSVYDIEWADGVKYGEIFIQPEYEHSKYSFEISDQEMLLENFDKFEKEAGRALEEGLVHPAYDYVLKCSHTFNLLDARGAVSVTERAGYIARIRNLARVVAKTFVAERKRLGYPLLDEETRAKLLAEDAE.

This sequence belongs to the class-II aminoacyl-tRNA synthetase family. As to quaternary structure, tetramer of two alpha and two beta subunits.

The protein localises to the cytoplasm. It carries out the reaction tRNA(Gly) + glycine + ATP = glycyl-tRNA(Gly) + AMP + diphosphate. The protein is Glycine--tRNA ligase alpha subunit of Streptococcus pneumoniae (strain Hungary19A-6).